The following is a 390-amino-acid chain: NADH-quinone oxidoreductase subunit D (390 aa).

It belongs to the complex I 49 kDa subunit family. NDH-1 is composed of 14 different subunits. Subunits NuoB, C, D, E, F, and G constitute the peripheral sector of the complex.

It is found in the cell inner membrane. It carries out the reaction a quinone + NADH + 5 H(+)(in) = a quinol + NAD(+) + 4 H(+)(out). In terms of biological role, NDH-1 shuttles electrons from NADH, via FMN and iron-sulfur (Fe-S) centers, to quinones in the respiratory chain. The immediate electron acceptor for the enzyme in this species is believed to be ubiquinone. Couples the redox reaction to proton translocation (for every two electrons transferred, four hydrogen ions are translocated across the cytoplasmic membrane), and thus conserves the redox energy in a proton gradient. The polypeptide is NADH-quinone oxidoreductase subunit D (Geobacter sulfurreducens (strain ATCC 51573 / DSM 12127 / PCA)).